The following is a 61-amino-acid chain: MDPNCSCPTGGSCTCAGSCKCKACRCPSCKKSCCSCCPVGCAKCAQGCVCKGASDKCSCCA.

The residue at position 1 (M1) is an N-acetylmethionine. A beta region spans residues 1 to 29 (MDPNCSCPTGGSCTCAGSCKCKACRCPSC). C5, C7, C13, C15, C19, C21, C24, C26, C29, C33, C34, C36, C37, C41, C44, C48, C50, C57, C59, and C60 together coordinate a divalent metal cation. The alpha stretch occupies residues 30-61 (KKSCCSCCPVGCAKCAQGCVCKGASDKCSCCA).

This sequence belongs to the metallothionein superfamily. Type 1 family. As to quaternary structure, monomer.

Its function is as follows. Metallothioneins have a high content of cysteine residues that bind various heavy metals; these proteins are transcriptionally regulated by both heavy metals and glucocorticoids. In Bos taurus (Bovine), this protein is Metallothionein-1 (MT1).